An 86-amino-acid chain; its full sequence is Exodeoxyribonuclease 7 small subunit (86 aa).

The segment at 64 to 86 (SNPETVQDKTDTDEPDSNEFSLT) is disordered.

The protein belongs to the XseB family. As to quaternary structure, heterooligomer composed of large and small subunits.

Its subcellular location is the cytoplasm. It carries out the reaction Exonucleolytic cleavage in either 5'- to 3'- or 3'- to 5'-direction to yield nucleoside 5'-phosphates.. Its function is as follows. Bidirectionally degrades single-stranded DNA into large acid-insoluble oligonucleotides, which are then degraded further into small acid-soluble oligonucleotides. The sequence is that of Exodeoxyribonuclease 7 small subunit from Akkermansia muciniphila (strain ATCC BAA-835 / DSM 22959 / JCM 33894 / BCRC 81048 / CCUG 64013 / CIP 107961 / Muc).